The sequence spans 308 residues: High-affinity branched-chain amino acid transport system permease protein LivH (308 aa).

Over 1-21 (MSEQFLYFLQQMFNGVTLGST) the chain is Cytoplasmic. The helical transmembrane segment at 22–42 (YALIAIGYTMVYGIIGMINFA) threads the bilayer. Over 43–45 (HGE) the chain is Periplasmic. The helical transmembrane segment at 46–66 (VYMIGSYVSFMIIAALMMMGI) threads the bilayer. At 67–68 (DT) the chain is on the cytoplasmic side. A helical membrane pass occupies residues 69 to 89 (GWLLVAAGFVGAIVIASAYGW). The Periplasmic portion of the chain corresponds to 90–104 (SIERVAYRPVRNSKR). Residues 105–125 (LIALISAIGMSIFLQNYVSLT) traverse the membrane as a helical segment. The Cytoplasmic portion of the chain corresponds to 126 to 154 (EGSRDVALPSLFNGQWVVGHSENFSASIT). Residues 155–175 (TMQAVIWIVTFLAMLALTIFI) form a helical membrane-spanning segment. Over 176–203 (RYSRMGRACRACAEDLKMASLLGINTDR) the chain is Periplasmic. The helical transmembrane segment at 204–224 (VIALTFVIGAAMAAVAGVLLG) threads the bilayer. Over 225 to 245 (QFYGVINPYIGFMAGMKAFTA) the chain is Cytoplasmic. A helical transmembrane segment spans residues 246 to 266 (AVLGGIGSIPGAMIGGLILGI). The Periplasmic portion of the chain corresponds to 267–280 (AEALSSAYLSTEYK). Residues 281–301 (DVVSFALLILVLLVMPTGILG) form a helical membrane-spanning segment. Residues 302–308 (RPEVEKV) lie on the Cytoplasmic side of the membrane.

This sequence belongs to the binding-protein-dependent transport system permease family. LivHM subfamily.

The protein resides in the cell inner membrane. In terms of biological role, part of the binding-protein-dependent transport system for branched-chain amino acids. Probably responsible for the translocation of the substrates across the membrane. The polypeptide is High-affinity branched-chain amino acid transport system permease protein LivH (livH) (Escherichia coli O157:H7).